Here is a 462-residue protein sequence, read N- to C-terminus: Transcript termination protein A18 (462 aa).

The 157-residue stretch at 99-255 (KCKEKRPLYT…NSIINFIKFS (157 aa)) folds into the Helicase ATP-binding domain. 112–119 (LACGFGKT) contacts ATP. The DEAH box motif lies at 205-208 (DEAH). The Helicase C-terminal domain occupies 308-459 (IVDKIIETFK…ATKLGFREVS (152 aa)).

Belongs to the helicase family. Poxviruses subfamily. Interacts with G2. Might be part of a transcription complex composed at least of G2, A18, and H5.

The protein localises to the virion. Functionally, DNA helicase which seems to act as a postreplicative transcription termination factor. Involved in ATP-dependent release of nascent RNA. Forms a stable complex with single-stranded DNA, and to a lesser extent RNA. The chain is Transcript termination protein A18 from Vertebrata (FPV).